The following is a 226-amino-acid chain: Lipoprotein-releasing system ATP-binding protein LolD (226 aa).

One can recognise an ABC transporter domain in the interval 5–226 (LKATNINKIY…LLRNGHWENY (222 aa)). 41-48 (GTSGSGKS) lines the ATP pocket.

The protein belongs to the ABC transporter superfamily. Lipoprotein translocase (TC 3.A.1.125) family. In terms of assembly, the complex is composed of two ATP-binding proteins (LolD) and two transmembrane proteins (LolC and LolE).

The protein localises to the cell inner membrane. Its function is as follows. Part of the ABC transporter complex LolCDE involved in the translocation of mature outer membrane-directed lipoproteins, from the inner membrane to the periplasmic chaperone, LolA. Responsible for the formation of the LolA-lipoprotein complex in an ATP-dependent manner. The polypeptide is Lipoprotein-releasing system ATP-binding protein LolD (Psychrobacter cryohalolentis (strain ATCC BAA-1226 / DSM 17306 / VKM B-2378 / K5)).